We begin with the raw amino-acid sequence, 71 residues long: Potassium voltage-gated channel subfamily E member 2 (71 aa).

Residues 7-27 form a helical membrane-spanning segment; the sequence is VILYLMVMIGMFSFIIVAILV. The Cytoplasmic segment spans residues 28–71; it reads STVKSKRREHSNDPYHQYIVEDWQEKYKSQILHFEEAKATIHEN.

It belongs to the potassium channel KCNE family. In terms of assembly, interacts with KCNB1. Associates with KCNH2/ERG1. May associate with KCNQ2 and KCNQ3. Associates with HCN1 and probably HCN2. Heteromultimer with KCNC2. Interacts with KCNC2. Interacts with KCNQ1; forms a heterooligomer complex that targets to the membrane raft and leading to currents with an apparently instantaneous activation, a rapid deactivation process and a linear current-voltage relationship and decreases the amplitude of the outward current. In terms of tissue distribution, detected in heart; expression is highest in the SA node and the right atrium, and barely detectable in the ventricle.

The protein resides in the cell membrane. Its subcellular location is the apical cell membrane. Its function is as follows. Ancillary protein that functions as a regulatory subunit of the voltage-gated potassium (Kv) channel complex composed of pore-forming and potassium-conducting alpha subunits and of regulatory beta subunits. KCNE2 beta subunit modulates the gating kinetics and enhances stability of the channel complex. Alters the gating of the delayed rectifier Kv channel containing KCNB1 alpha subunit. Associates with KCNH2/HERG alpha subunit Kv channel to form the rapidly activating component of the delayed rectifying potassium current (IKr) in heart. May associate with KCNQ2 and/or KCNQ3 alpha subunits to modulate the native M-type current. May associate with HCN1 and HCN2 channel subunits to increase potassium current. Forms a heterooligomer complex with KCNQ1/KVLQT1 alpha subunits which leads to currents with an apparently instantaneous activation, a rapid deactivation process and a linear current-voltage relationship and decreases the amplitude of the outward current. KCNQ1-KCNE2 channel associates with Na(+)-coupled myo-inositol symporter in the apical membrane of choroid plexus epithelium and regulates the myo-inositol gradient between blood and cerebrospinal fluid with an impact on neuron excitability. This Oryctolagus cuniculus (Rabbit) protein is Potassium voltage-gated channel subfamily E member 2 (KCNE2).